The primary structure comprises 611 residues: DNA-directed RNA polymerase subunit Rpo2C (611 aa).

Residues Cys547, Cys550, Cys565, and Cys568 each coordinate Zn(2+).

This sequence belongs to the RNA polymerase beta chain family. In terms of assembly, part of the RNA polymerase complex. The cofactor is Zn(2+).

It localises to the cytoplasm. It catalyses the reaction RNA(n) + a ribonucleoside 5'-triphosphate = RNA(n+1) + diphosphate. Its function is as follows. DNA-dependent RNA polymerase (RNAP) catalyzes the transcription of DNA into RNA using the four ribonucleoside triphosphates as substrates. The Rpo2 subunit (Rpo2N and Rpo2C in this organism) is implicated in DNA promoter recognition and in nucleotide binding. The protein is DNA-directed RNA polymerase subunit Rpo2C of Methanococcus vannielii (strain ATCC 35089 / DSM 1224 / JCM 13029 / OCM 148 / SB).